A 507-amino-acid polypeptide reads, in one-letter code: Probable aldehyde dehydrogenase (507 aa).

Residue 219–225 (GFGAEAG) participates in NAD(+) binding. Residues E263 and C302 contribute to the active site.

Belongs to the aldehyde dehydrogenase family.

The enzyme catalyses an aldehyde + NAD(+) + H2O = a carboxylate + NADH + 2 H(+). This Mycobacterium bovis (strain ATCC BAA-935 / AF2122/97) protein is Probable aldehyde dehydrogenase.